A 139-amino-acid chain; its full sequence is Large ribosomal subunit protein uL24 (139 aa).

The tract at residues 1-25 is disordered; it reads MKRNTNVSSSRRKSRKAHFTASSGE.

Belongs to the universal ribosomal protein uL24 family.

The sequence is that of Large ribosomal subunit protein uL24 (rpl26) from Dictyostelium discoideum (Social amoeba).